We begin with the raw amino-acid sequence, 257 residues long: UPF0246 protein Ping_3037 (257 aa).

This sequence belongs to the UPF0246 family.

In Psychromonas ingrahamii (strain DSM 17664 / CCUG 51855 / 37), this protein is UPF0246 protein Ping_3037.